We begin with the raw amino-acid sequence, 201 residues long: Protamine-like protein 99C (201 aa).

Residues 93-143 (GGQQSSCQRQSPSARLRESERRSSRSKTLCRSAKNRQRGKPKPQQSKRRLS) are disordered. The span at 94 to 104 (GQQSSCQRQSP) shows a compositional bias: polar residues. A compositionally biased stretch (basic residues) spans 125-143 (AKNRQRGKPKPQQSKRRLS).

Belongs to the UPF0771 family.

It is found in the nucleus. Its subcellular location is the chromosome. Regulates chromatin compaction in spermatid nuclei and is essential for male fertility. Functions in parallel with other chromatin-condensing proteins such as ProtA, ProtB and Mst77F. This chain is Protamine-like protein 99C, found in Drosophila melanogaster (Fruit fly).